Here is a 341-residue protein sequence, read N- to C-terminus: Glycerol-3-phosphate dehydrogenase [NAD(P)+] (341 aa).

NADPH-binding residues include Ser-14, Phe-15, Arg-35, and Lys-108. Residues Lys-108 and Gly-136 each contribute to the sn-glycerol 3-phosphate site. Ser-140 contacts NADPH. Sn-glycerol 3-phosphate-binding residues include Lys-191, Asp-244, Ser-254, Arg-255, and Asn-256. Residue Lys-191 is the Proton acceptor of the active site. Arg-255 contacts NADPH. Positions 279 and 281 each coordinate NADPH.

The protein belongs to the NAD-dependent glycerol-3-phosphate dehydrogenase family.

It localises to the cytoplasm. It carries out the reaction sn-glycerol 3-phosphate + NAD(+) = dihydroxyacetone phosphate + NADH + H(+). The enzyme catalyses sn-glycerol 3-phosphate + NADP(+) = dihydroxyacetone phosphate + NADPH + H(+). It participates in membrane lipid metabolism; glycerophospholipid metabolism. In terms of biological role, catalyzes the reduction of the glycolytic intermediate dihydroxyacetone phosphate (DHAP) to sn-glycerol 3-phosphate (G3P), the key precursor for phospholipid synthesis. The polypeptide is Glycerol-3-phosphate dehydrogenase [NAD(P)+] (Pseudomonas putida (strain GB-1)).